The primary structure comprises 393 residues: Argininosuccinate synthase (393 aa).

Residues 10-18 and A37 contribute to the ATP site; that span reads AYSGGLDTS. Y88 is an L-citrulline binding site. G118 is a binding site for ATP. T120, N124, and D125 together coordinate L-aspartate. N124 is a binding site for L-citrulline. The L-citrulline site is built by R128, S176, S185, E261, and Y273.

It belongs to the argininosuccinate synthase family. Type 1 subfamily. Homotetramer.

It localises to the cytoplasm. It carries out the reaction L-citrulline + L-aspartate + ATP = 2-(N(omega)-L-arginino)succinate + AMP + diphosphate + H(+). It participates in amino-acid biosynthesis; L-arginine biosynthesis; L-arginine from L-ornithine and carbamoyl phosphate: step 2/3. This Carsonella ruddii (strain PV) protein is Argininosuccinate synthase.